Consider the following 274-residue polypeptide: Glucosamine-6-phosphate deaminase (274 aa).

Asp-71 (proton acceptor; for enolization step) is an active-site residue. The active-site For ring-opening step is the Asp-140. The active-site Proton acceptor; for ring-opening step is the His-142. Glu-147 functions as the For ring-opening step in the catalytic mechanism.

Belongs to the glucosamine/galactosamine-6-phosphate isomerase family. NagB subfamily.

It catalyses the reaction alpha-D-glucosamine 6-phosphate + H2O = beta-D-fructose 6-phosphate + NH4(+). Its pathway is amino-sugar metabolism; N-acetylneuraminate degradation; D-fructose 6-phosphate from N-acetylneuraminate: step 5/5. Functionally, catalyzes the reversible isomerization-deamination of glucosamine 6-phosphate (GlcN6P) to form fructose 6-phosphate (Fru6P) and ammonium ion. The protein is Glucosamine-6-phosphate deaminase of Fusobacterium nucleatum subsp. nucleatum (strain ATCC 25586 / DSM 15643 / BCRC 10681 / CIP 101130 / JCM 8532 / KCTC 2640 / LMG 13131 / VPI 4355).